A 92-amino-acid polypeptide reads, in one-letter code: UPF0473 protein BC_4380 (92 aa).

Belongs to the UPF0473 family.

In Bacillus cereus (strain ATCC 14579 / DSM 31 / CCUG 7414 / JCM 2152 / NBRC 15305 / NCIMB 9373 / NCTC 2599 / NRRL B-3711), this protein is UPF0473 protein BC_4380.